A 283-amino-acid polypeptide reads, in one-letter code: Pantothenate synthetase (283 aa).

Residue 31–38 coordinates ATP; it reads MGALHDGH. His-38 functions as the Proton donor in the catalytic mechanism. Position 62 (Gln-62) interacts with (R)-pantoate. Gln-62 contacts beta-alanine. ATP is bound at residue 148 to 151; the sequence is GKKD. Gln-154 contacts (R)-pantoate. Residues Val-177 and 185–188 each bind ATP; that span reads KSSR.

It belongs to the pantothenate synthetase family. Homodimer.

The protein resides in the cytoplasm. The enzyme catalyses (R)-pantoate + beta-alanine + ATP = (R)-pantothenate + AMP + diphosphate + H(+). Its pathway is cofactor biosynthesis; (R)-pantothenate biosynthesis; (R)-pantothenate from (R)-pantoate and beta-alanine: step 1/1. Functionally, catalyzes the condensation of pantoate with beta-alanine in an ATP-dependent reaction via a pantoyl-adenylate intermediate. The sequence is that of Pantothenate synthetase from Staphylococcus aureus (strain Mu3 / ATCC 700698).